A 188-amino-acid polypeptide reads, in one-letter code: Xanthine phosphoribosyltransferase (188 aa).

Residues L20 and N27 each coordinate xanthine. 127–131 (ANGNA) contacts 5-phospho-alpha-D-ribose 1-diphosphate. Position 155 (K155) interacts with xanthine.

It belongs to the purine/pyrimidine phosphoribosyltransferase family. Xpt subfamily. As to quaternary structure, homodimer.

It localises to the cytoplasm. The enzyme catalyses XMP + diphosphate = xanthine + 5-phospho-alpha-D-ribose 1-diphosphate. Its pathway is purine metabolism; XMP biosynthesis via salvage pathway; XMP from xanthine: step 1/1. Converts the preformed base xanthine, a product of nucleic acid breakdown, to xanthosine 5'-monophosphate (XMP), so it can be reused for RNA or DNA synthesis. The polypeptide is Xanthine phosphoribosyltransferase (Phocaeicola vulgatus (strain ATCC 8482 / DSM 1447 / JCM 5826 / CCUG 4940 / NBRC 14291 / NCTC 11154) (Bacteroides vulgatus)).